A 251-amino-acid polypeptide reads, in one-letter code: 1-(5-phosphoribosyl)-5-[(5-phosphoribosylamino)methylideneamino] imidazole-4-carboxamide isomerase (251 aa).

Residue D7 is the Proton acceptor of the active site. D131 serves as the catalytic Proton donor.

The protein belongs to the HisA/HisF family.

The protein localises to the cytoplasm. It catalyses the reaction 1-(5-phospho-beta-D-ribosyl)-5-[(5-phospho-beta-D-ribosylamino)methylideneamino]imidazole-4-carboxamide = 5-[(5-phospho-1-deoxy-D-ribulos-1-ylimino)methylamino]-1-(5-phospho-beta-D-ribosyl)imidazole-4-carboxamide. It participates in amino-acid biosynthesis; L-histidine biosynthesis; L-histidine from 5-phospho-alpha-D-ribose 1-diphosphate: step 4/9. The polypeptide is 1-(5-phosphoribosyl)-5-[(5-phosphoribosylamino)methylideneamino] imidazole-4-carboxamide isomerase (Blochmanniella floridana).